A 424-amino-acid polypeptide reads, in one-letter code: Tyrosine--tRNA ligase (424 aa).

Tyrosine 37 is a binding site for L-tyrosine. The short motif at 42-51 (PTADSLHLGH) is the 'HIGH' region element. 2 residues coordinate L-tyrosine: tyrosine 175 and glutamine 179. Positions 235–239 (KFGKT) match the 'KMSKS' region motif. Lysine 238 contacts ATP. The 58-residue stretch at 357-414 (ADLMQALVDAELQPSRGQARKTIASNAVTINGEKQSDPEYIFNDEDRLFGRYTLLRRG) folds into the S4 RNA-binding domain.

The protein belongs to the class-I aminoacyl-tRNA synthetase family. TyrS type 1 subfamily. Homodimer.

Its subcellular location is the cytoplasm. The catalysed reaction is tRNA(Tyr) + L-tyrosine + ATP = L-tyrosyl-tRNA(Tyr) + AMP + diphosphate + H(+). Its function is as follows. Catalyzes the attachment of tyrosine to tRNA(Tyr) in a two-step reaction: tyrosine is first activated by ATP to form Tyr-AMP and then transferred to the acceptor end of tRNA(Tyr). The polypeptide is Tyrosine--tRNA ligase (Salmonella enteritidis PT4 (strain P125109)).